The primary structure comprises 1038 residues: Ras GTPase-activating protein 1 (1038 aa).

Residue methionine 1 is modified to N-acetylmethionine. The segment covering 1 to 16 has biased composition (low complexity); it reads MMAAEAGSEEGGPATA. 2 disordered regions span residues 1–24 and 117–152; these read MMAA…AAAT and ETLG…SLDG. A compositionally biased stretch (pro residues) spans 124-135; that stretch reads GFPPLPPPPLLP. Residues 172-263 enclose the SH2 1 domain; that stretch reads WYHGKLDRTI…LKGEKLLYPV (92 aa). Residues 270–332 form the SH3 domain; sequence EDRRRVRAIL…VEDLVEEVGR (63 aa). The SH2 2 domain maps to 342–432; sequence WFHGKISKQE…VEGYYLKEPV (91 aa). One can recognise a PH domain in the interval 465–568; it reads NIVKKGYLLK…WMKGLQAFCS (104 aa). Positions 568–681 constitute a C2 domain; the sequence is SLRKSSPGTS…QKGHATDEWF (114 aa). The residue at position 606 (tyrosine 606) is a Phosphotyrosine. Positions 755-965 constitute a Ras-GAP domain; sequence KLESLLLCTL…HRMIMFLDEL (211 aa). The residue at position 822 (serine 822) is a Phosphoserine.

Interacts with SQSTM1. Interacts with SPSB1; the interaction does not promote degradation. Interacts with CAV2 (tyrosine phosphorylated form). Directly interacts with NCK1. Interacts with PDGFRB (tyrosine phosphorylated). Interacts (via SH2 domain) with the 'Tyr-9' phosphorylated form of PDPK1. Interacts with tyrosine-phosphorylated EPHB4. In terms of processing, phosphorylated by SRC and LCK. The phosphorylation SRC inhibits its ability to stimulate the Ras-GTPase activity, whereas phosphorylation by LCK does not display any effect on stimulation activity.

It is found in the cytoplasm. In terms of biological role, inhibitory regulator of the Ras-cyclic AMP pathway. Stimulates the GTPase of normal but not oncogenic Ras p21. The polypeptide is Ras GTPase-activating protein 1 (Rasa1) (Rattus norvegicus (Rat)).